Here is a 200-residue protein sequence, read N- to C-terminus: Insulin, isoform 2 (200 aa).

The interval 148-200 (EVDSSPQPQGSESLPAQPPAQPAPQPEPQQAREPSPEVSCCGLWPRRPQRSQN) is disordered. A compositionally biased stretch (pro residues) spans 163-174 (AQPPAQPAPQPE). The span at 175–184 (PQQAREPSPE) shows a compositional bias: low complexity.

As to expression, expressed in pancreas, eye and, to a lower extent, in limb.

The chain is Insulin, isoform 2 (INS-IGF2) from Homo sapiens (Human).